Consider the following 313-residue polypeptide: MASLADRVRGNGRIAAGLLLNLLVSICIVFLNKWIYVHYGFPNMSLTLVHFVVTWLGLYVCQKLDIFAPKSLPPSKLLLLALSFCGFVVFTNLSLQNNTIGTYQLAKAMTTPVIIVIQTLCYKKTFSTKIRLTLIPITLGVILNSYYDVKFNFLGTVFAALGVLVTSLYQVWVGAKQHELQVNSMQLLYYQAPMSSAMLLVAVPFFEPVFAEGGIFGPWSVSALLMVLLSGVIAFMVNLSIYWIIGNTSPVTYNMFGHFKFCITLFGGYVLFKDPLSINQGLGMLCTLFGILAYTHFKLSEQEGSKSKLVQRP.

Transmembrane regions (helical) follow at residues 17 to 37, 40 to 60, 77 to 97, 100 to 120, 130 to 147, 153 to 173, 187 to 206, 225 to 245, 252 to 272, and 275 to 295; these read GLLLNLLVSICIVFLNKWIYV, GFPNMSLTLVHFVVTWLGLYV, LLLLALSFCGFVVFTNLSLQN, IGTYQLAKAMTTPVIIVIQTL, IRLTLIPITLGVILNSYY, FLGTVFAALGVLVTSLYQVWV, LLYYQAPMSSAMLLVAVPFF, LMVLLSGVIAFMVNLSIYWII, TYNMFGHFKFCITLFGGYVLF, and PLSINQGLGMLCTLFGILAYT.

It belongs to the TPT transporter family. SLC35E subfamily.

The protein resides in the membrane. In terms of biological role, putative transporter. In Bos taurus (Bovine), this protein is Solute carrier family 35 member E3 (SLC35E3).